The primary structure comprises 436 residues: Small ribosomal subunit protein uS5m (436 aa).

The 67-residue stretch at 152–218 (FETYCLEVKR…GMASRKLFHV (67 aa)) folds into the S5 DRBM domain. Positions 417-436 (GVEPMPLGIGLSHVVPKKDD) are disordered.

This sequence belongs to the universal ribosomal protein uS5 family. Component of the mitochondrial ribosome small subunit (28S) which comprises a 12S rRNA and about 30 distinct proteins.

It localises to the mitochondrion. In Caenorhabditis elegans, this protein is Small ribosomal subunit protein uS5m (mrps-5).